The primary structure comprises 360 residues: Peptide chain release factor 1 (360 aa).

Position 237 is an N5-methylglutamine (Gln237).

Belongs to the prokaryotic/mitochondrial release factor family. Post-translationally, methylated by PrmC. Methylation increases the termination efficiency of RF1.

It is found in the cytoplasm. Its function is as follows. Peptide chain release factor 1 directs the termination of translation in response to the peptide chain termination codons UAG and UAA. This Pseudomonas putida (strain ATCC 47054 / DSM 6125 / CFBP 8728 / NCIMB 11950 / KT2440) protein is Peptide chain release factor 1.